A 168-amino-acid polypeptide reads, in one-letter code: RxLR effector protein PITG_12737 (168 aa).

Positions 1–20 are cleaved as a signal peptide; it reads MRACAILVVAAAAVLTGSTA. Residues 54-77 carry the RxLR-dEER motif; that stretch reads RRLRKHKTVNTNSEMEYESEAEAR.

The protein belongs to the RxLR effector family.

It localises to the secreted. Its subcellular location is the host nucleus. The protein resides in the host cytoplasm. Its function is as follows. Effector that enhances P.infestans colonization of Nicotiana benthamiana leaves. This chain is RxLR effector protein PITG_12737, found in Phytophthora infestans (strain T30-4) (Potato late blight agent).